A 329-amino-acid chain; its full sequence is MIQLKDMVMKLSGTSRHHGQQRRGGSPPPRGRTTSVYRSGYYRPGMVQDDMAVPPATYLGGGGTSMSSASSTPAWDFARPAEGEAREWVAQVEPGVQITFVSLAGGGGNDLKRIRFSREMYDKWQAQKWWGENNERIMELYNVRRFSRQVLPTPPRSDDGERESFYSQVGSTRGSPAATPSPAPLTPDRVTSWSAFVRPPSASRQQQQHSFRPLSPPPPSSSNPSERAWQQQQQPQRAGKSPAAASDAMDAARTTSCSSRDEVSISNASELEVTEWVIQDEPGVYITVRELADGTRELRRVRFSRERFAELNAKLWWEENKERIQAQYL.

The segment at 12 to 37 is disordered; that stretch reads SGTSRHHGQQRRGGSPPPRGRTTSVY. Residues 86-142 enclose the BRX 1 domain; sequence REWVAQVEPGVQITFVSLAGGGGNDLKRIRFSREMYDKWQAQKWWGENNERIMELYN. The segment at 151-263 is disordered; that stretch reads LPTPPRSDDG…TTSCSSRDEV (113 aa). 2 stretches are compositionally biased toward low complexity: residues 222-236 and 243-252; these read SNPSERAWQQQQQPQ and AAASDAMDAA. A compositionally biased stretch (polar residues) spans 253–263; that stretch reads RTTSCSSRDEV. Residues 274 to 329 form the BRX 2 domain; that stretch reads TEWVIQDEPGVYITVRELADGTRELRRVRFSRERFAELNAKLWWEENKERIQAQYL.

It belongs to the BRX family.

The protein resides in the nucleus. This chain is Protein Brevis radix-like 4 (BRXL4), found in Oryza sativa subsp. japonica (Rice).